A 552-amino-acid chain; its full sequence is T-box transcription factor TBX4 (552 aa).

Over residues 1–14 the composition is skewed to basic and acidic residues; the sequence is MLQDKGLSESEEAF. A disordered region spans residues 1 to 50; that stretch reads MLQDKGLSESEEAFRAPGPALGEASNTSTTNAPEPALATPGLSGAALSSP. The segment at residues 76–256 is a DNA-binding region (T-box); sequence LHEKELWKKF…NNPFAKGFRG (181 aa). At S514 the chain carries Phosphoserine.

It localises to the nucleus. Its function is as follows. Transcriptional regulator that has an essential role in the organogenesis of lungs, pelvis, and hindlimbs. This Mus musculus (Mouse) protein is T-box transcription factor TBX4 (Tbx4).